The chain runs to 223 residues: MKTNKKISKRRSLKNLHGALKGLLKESGKKSESKIRKHSDCNPVHRVYPPNIEKRKTKKDDGISRPIAERNGHVYIMSKENHIIPKLTDDEVMERHKLADENMRKVWSNIISKYESIEEQGDLVDLKTGEIVEDNGHIKTLTANNSTKDKRTKYTSVLRDIIDISDEEDGDKNDEYTLWANDSEASDSEVDADNDTEEEKDEKLIDADFKKYEAKLSKRILRD.

Positions 1 to 14 (MKTNKKISKRRSLK) are enriched in basic residues. Disordered stretches follow at residues 1 to 48 (MKTN…HRVY) and 168 to 202 (EDGDKNDEYTLWANDSEASDSEVDADNDTEEEKDE). A compositionally biased stretch (basic and acidic residues) spans 23 to 40 (LLKESGKKSESKIRKHSD). Residues 184–200 (EASDSEVDADNDTEEEK) are compositionally biased toward acidic residues.

Interacts with YTA7.

It localises to the nucleus. In terms of biological role, centromeric protein that plays a central role in the incorporation and maintenance of histone H3-like variant CENPA at centromeres. The chain is Protein SCM3 (SCM3) from Saccharomyces cerevisiae (strain ATCC 204508 / S288c) (Baker's yeast).